Consider the following 264-residue polypeptide: MAVGKNKRVSKGKKGGKKKIVDPFLKKEWYTLKAPVMFHVRNFGQTLVSKTQGTKLATDGLRGRIYEVSLADLNADEDQSYRKIKLCCEDIQGRNCLTNFHGTSVTRDKLCSLIRKNYSLIEAFTDVKTTDGYTLRMFCIGYTKRRPGQLKSTCYIRSSRTRVVRRKMIEVMQREASTTSMREVVKKIIPESIGKEIEKACKSVFPLQNVLIRKIKVLKKPKFDLTKLMEVHTDISEETGHATKVEESEEAANLLTKELDAQEA.

It belongs to the eukaryotic ribosomal protein eS1 family. Component of the small ribosomal subunit. Mature ribosomes consist of a small (40S) and a large (60S) subunit. The 40S subunit contains about 33 different proteins and 1 molecule of RNA (18S). The 60S subunit contains about 49 different proteins and 3 molecules of RNA (25S, 5.8S and 5S).

The protein resides in the cytoplasm. This is Small ribosomal subunit protein eS1 from Babesia bovis.